Consider the following 473-residue polypeptide: Probable ribonuclease FAU-1 (473 aa).

This sequence belongs to the FAU-1 family.

In terms of biological role, probable RNase involved in rRNA stability through maturation and/or degradation of precursor rRNAs. Binds to RNA in loop regions with AU-rich sequences. In Hyperthermus butylicus (strain DSM 5456 / JCM 9403 / PLM1-5), this protein is Probable ribonuclease FAU-1.